The following is a 363-amino-acid chain: Mannose-1-phosphate guanyltransferase (363 aa).

Belongs to the transferase hexapeptide repeat family.

Its subcellular location is the cytoplasm. It carries out the reaction alpha-D-mannose 1-phosphate + GTP + H(+) = GDP-alpha-D-mannose + diphosphate. It functions in the pathway nucleotide-sugar biosynthesis; GDP-alpha-D-mannose biosynthesis; GDP-alpha-D-mannose from alpha-D-mannose 1-phosphate (GTP route): step 1/1. In terms of biological role, involved in cell wall synthesis where it is required for glycosylation. Involved in cell cycle progression through cell-size checkpoint. Required for the correct assembly of the septum. This Schizosaccharomyces pombe (strain 972 / ATCC 24843) (Fission yeast) protein is Mannose-1-phosphate guanyltransferase (mpg1).